The primary structure comprises 210 residues: Pyridoxine/pyridoxamine 5'-phosphate oxidase (210 aa).

Substrate contacts are provided by residues 7-10 (RDEY) and Lys65. Residues 60-65 (RMVLLK), 75-76 (FT), Arg81, Lys82, and Gln104 contribute to the FMN site. The substrate site is built by Tyr122, Arg126, and Ser130. FMN contacts are provided by residues 139–140 (QS) and Trp183. 189-191 (RLH) serves as a coordination point for substrate. Arg193 is an FMN binding site.

This sequence belongs to the pyridoxamine 5'-phosphate oxidase family. As to quaternary structure, homodimer. The cofactor is FMN.

The enzyme catalyses pyridoxamine 5'-phosphate + O2 + H2O = pyridoxal 5'-phosphate + H2O2 + NH4(+). It catalyses the reaction pyridoxine 5'-phosphate + O2 = pyridoxal 5'-phosphate + H2O2. It functions in the pathway cofactor metabolism; pyridoxal 5'-phosphate salvage; pyridoxal 5'-phosphate from pyridoxamine 5'-phosphate: step 1/1. The protein operates within cofactor metabolism; pyridoxal 5'-phosphate salvage; pyridoxal 5'-phosphate from pyridoxine 5'-phosphate: step 1/1. In terms of biological role, catalyzes the oxidation of either pyridoxine 5'-phosphate (PNP) or pyridoxamine 5'-phosphate (PMP) into pyridoxal 5'-phosphate (PLP). The chain is Pyridoxine/pyridoxamine 5'-phosphate oxidase from Haemophilus influenzae (strain 86-028NP).